The chain runs to 926 residues: MALKSPAFRKKFPLLVTGSLLAMQPLATQFVVAAEQYDCSVSASGAWNCAPKSNAAAVDLPPRPVHDTTSVSSNGTVTSQSTSSGEQVAGTQLVTEAKGKGLRSRSADYSHLDWVPREKLTAAQLAETGPYCSGAYVEPIRPGMDDKTPMKDAPMFVGAKASRYEQEAQVATLAGDVVLRQGSMQVQAQEAALHQAENRGELNGDVRLRDNGALIVGDKAELQLDTGEARVDNAEYVLHKSNIRGNALYAKRAENAIIRLKDGTYTTCEPNSNAWTLKGNNITLNPATGFGTATNVTLRVKDIPVLYTPYIYFPIDDRRQSGFLPPTIAAGGDNGFTLVTPYYFNLAPNYDATLYPRYMADRGLLMEGEFRYLTKGSEGQFGGAYLNDENDDRKLQSDYDKTRWMINWQHKGGLDTRWLTQVDYTDISDPYYFQDLETDQIGVKRTDFLNQQGSLTYRGDSYAATLNAQAYKLATVANITPYNRLPQLTLNGTLPYNPGGLKFDYQTEAVRFERDLRSGAFIDEDGNSETRLDNNISGLARANGDRLNLAPSVSLPMNWTYGFLTPKLKYVYTQYALDLDSQGKSSLLAGEEYSSSQSRSVPIFSVDSGLYFDRNTNWFGKDYRQTLEPRLFYLYVPEKDQTDIPVFDTSESTFNYASLFRDNRFTGSDRIGDENKLSLGITNRWIEDNGFERQRFSIGQALYFEDRKVQLPGVVFADRDDARANVSPYALEYEYRFNRDWRFNSDFNWDPDSKSTRSGSAMFHYQPEDNPNKIVNLGYRYRNDQIRYDESTGRWIVGGGDYGRPGDANYVKDYYKIQQHDFSVIWPIVPQWSLISRWQYDYNRERTIEAFGGFEYDNCCWKMRLVNRYWVDYDEFSQAAPQNEKGDRGIFLQIVLKGLGGVTGAKVDSFLDKGIQGYREREDQAF.

A signal peptide spans 1-22; that stretch reads MALKSPAFRKKFPLLVTGSLLA. The tract at residues 58 to 99 is disordered; it reads VDLPPRPVHDTTSVSSNGTVTSQSTSSGEQVAGTQLVTEAKG. The span at 68-85 shows a compositional bias: low complexity; that stretch reads TTSVSSNGTVTSQSTSSG.

Belongs to the LptD family. Component of the lipopolysaccharide transport and assembly complex. Interacts with LptE and LptA.

It localises to the cell outer membrane. Functionally, together with LptE, is involved in the assembly of lipopolysaccharide (LPS) at the surface of the outer membrane. The chain is LPS-assembly protein LptD from Pseudomonas savastanoi pv. phaseolicola (strain 1448A / Race 6) (Pseudomonas syringae pv. phaseolicola (strain 1448A / Race 6)).